A 193-amino-acid chain; its full sequence is Ribosomal RNA small subunit methyltransferase G (193 aa).

Residues Gly-62, Phe-67, 111-112, and Arg-125 each bind S-adenosyl-L-methionine; that span reads IE.

The protein belongs to the methyltransferase superfamily. RNA methyltransferase RsmG family.

It is found in the cytoplasm. It catalyses the reaction guanosine(527) in 16S rRNA + S-adenosyl-L-methionine = N(7)-methylguanosine(527) in 16S rRNA + S-adenosyl-L-homocysteine. Specifically methylates the N7 position of guanine in position 527 of 16S rRNA. The polypeptide is Ribosomal RNA small subunit methyltransferase G (Gluconobacter oxydans (strain 621H) (Gluconobacter suboxydans)).